The following is a 182-amino-acid chain: Transcription termination/antitermination protein NusG (182 aa).

In terms of domain architecture, KOW spans 131–163 (VGEQVRIKSGPFANQVGEVQEIEADKFKLTVLV).

Belongs to the NusG family.

Its function is as follows. Participates in transcription elongation, termination and antitermination. This is Transcription termination/antitermination protein NusG from Staphylococcus carnosus (strain TM300).